Consider the following 201-residue polypeptide: LexA repressor (201 aa).

The segment at residues 28-48 (LREIAAKLGISGTLGVMKHLE) is a DNA-binding region (H-T-H motif). Residues serine 120 and lysine 157 each act as for autocatalytic cleavage activity in the active site.

Belongs to the peptidase S24 family. In terms of assembly, homodimer.

It catalyses the reaction Hydrolysis of Ala-|-Gly bond in repressor LexA.. Its function is as follows. Represses a number of genes involved in the response to DNA damage (SOS response), including recA and lexA. In the presence of single-stranded DNA, RecA interacts with LexA causing an autocatalytic cleavage which disrupts the DNA-binding part of LexA, leading to derepression of the SOS regulon and eventually DNA repair. This chain is LexA repressor, found in Geobacter sp. (strain M21).